A 118-amino-acid chain; its full sequence is Large ribosomal subunit protein uL18 (118 aa).

This sequence belongs to the universal ribosomal protein uL18 family. As to quaternary structure, part of the 50S ribosomal subunit; part of the 5S rRNA/L5/L18/L25 subcomplex. Contacts the 5S and 23S rRNAs.

Its function is as follows. This is one of the proteins that bind and probably mediate the attachment of the 5S RNA into the large ribosomal subunit, where it forms part of the central protuberance. In Rickettsia typhi (strain ATCC VR-144 / Wilmington), this protein is Large ribosomal subunit protein uL18.